A 420-amino-acid chain; its full sequence is Torsin-4A-A (420 aa).

A helical membrane pass occupies residues 130–150; it reads CLLLFIGIVCFQILNAIENLD. 202 to 209 contacts ATP; that stretch reads GPSGVGKS.

This sequence belongs to the ClpA/ClpB family. Torsin subfamily.

The protein resides in the membrane. The chain is Torsin-4A-A (tor4a-a) from Xenopus laevis (African clawed frog).